The chain runs to 58 residues: Potassium channel toxin alpha-KTx 1.6 (58 aa).

The signal sequence occupies residues 1–21 (MKISFLLLLAIVICSIGWTEA). Glutamine 22 bears the Pyrrolidone carboxylic acid mark. 3 disulfides stabilise this stretch: cysteine 28-cysteine 49, cysteine 34-cysteine 54, and cysteine 38-cysteine 56.

Belongs to the short scorpion toxin superfamily. Potassium channel inhibitor family. Alpha-KTx 01 subfamily. As to expression, expressed by the venom gland.

The protein localises to the secreted. Functionally, potent blocker of both large-conductance calcium-activated potassium channels (KCa1.1/KCNMA1) and voltage-gated potassium channels (Kv1.3/KCNA3 and ERG1/Kv11.1/KCNH2). This Olivierus martensii (Manchurian scorpion) protein is Potassium channel toxin alpha-KTx 1.6.